We begin with the raw amino-acid sequence, 164 residues long: Crossover junction endodeoxyribonuclease RuvC (164 aa).

Catalysis depends on residues aspartate 7, glutamate 67, and aspartate 140. 3 residues coordinate Mg(2+): aspartate 7, glutamate 67, and aspartate 140.

It belongs to the RuvC family. In terms of assembly, homodimer which binds Holliday junction (HJ) DNA. The HJ becomes 2-fold symmetrical on binding to RuvC with unstacked arms; it has a different conformation from HJ DNA in complex with RuvA. In the full resolvosome a probable DNA-RuvA(4)-RuvB(12)-RuvC(2) complex forms which resolves the HJ. The cofactor is Mg(2+).

It is found in the cytoplasm. The catalysed reaction is Endonucleolytic cleavage at a junction such as a reciprocal single-stranded crossover between two homologous DNA duplexes (Holliday junction).. Its function is as follows. The RuvA-RuvB-RuvC complex processes Holliday junction (HJ) DNA during genetic recombination and DNA repair. Endonuclease that resolves HJ intermediates. Cleaves cruciform DNA by making single-stranded nicks across the HJ at symmetrical positions within the homologous arms, yielding a 5'-phosphate and a 3'-hydroxyl group; requires a central core of homology in the junction. The consensus cleavage sequence is 5'-(A/T)TT(C/G)-3'. Cleavage occurs on the 3'-side of the TT dinucleotide at the point of strand exchange. HJ branch migration catalyzed by RuvA-RuvB allows RuvC to scan DNA until it finds its consensus sequence, where it cleaves and resolves the cruciform DNA. The polypeptide is Crossover junction endodeoxyribonuclease RuvC (Finegoldia magna (strain ATCC 29328 / DSM 20472 / WAL 2508) (Peptostreptococcus magnus)).